Reading from the N-terminus, the 439-residue chain is ATP-dependent RNA helicase SrmB (439 aa).

A Q motif motif is present at residues 4 to 32; sequence SQFEQFDLSPELLKALEKKGYSRPTAIQM. Residues 35-209 enclose the Helicase ATP-binding domain; the sequence is IPAAMEESDV…AERLLNDPVK (175 aa). 48 to 55 contributes to the ATP binding site; sequence APTGTGKT. Positions 157-160 match the DEAD box motif; that stretch reads DEAD. The 151-residue stretch at 237–387 folds into the Helicase C-terminal domain; the sequence is KLLARFIETE…GLEPRTKPPK (151 aa). Residues 381 to 393 show a composition bias toward basic and acidic residues; that stretch reads PRTKPPKDGEVKS. The disordered stretch occupies residues 381 to 439; sequence PRTKPPKDGEVKSVSKKQKARIKEKREEKKKTEAKKKVKLRHKDTKNIGKRRKPSNSNV. Basic residues-rich tracts occupy residues 394–403 and 412–439; these read VSKKQKARIK and TEAK…NSNV.

Belongs to the DEAD box helicase family. SrmB subfamily. As to quaternary structure, interacts with the 50S ribosomal subunit.

Its subcellular location is the cytoplasm. The enzyme catalyses ATP + H2O = ADP + phosphate + H(+). Its function is as follows. DEAD-box RNA helicase involved in the assembly of the 50S ribosomal subunit at low temperature. Exhibits RNA-stimulated ATP hydrolysis and RNA unwinding activity. This is ATP-dependent RNA helicase SrmB from Haemophilus influenzae (strain ATCC 51907 / DSM 11121 / KW20 / Rd).